The chain runs to 21 residues: TRICCGCYWNGSKDVCSQSCC.

Cystine bridges form between Cys-4–Cys-20, Cys-5–Cys-21, and Cys-7–Cys-16.

Expressed by the salivary gland. This peptide is considered as a venom peptide.

It is found in the secreted. Functionally, injections of 20 uM of this synthetic peptide (Ile) causes partial paralysis to polychaete worms (Nereis virens), the natural prey of terebrid snails. This paralysis may be due to an inhibition of nicotinic receptors at the neuromuscular junction. The chain is Venom peptide Tv1 from Terebra variegata (Variegate auger snail).